A 600-amino-acid chain; its full sequence is Elongation factor 4 (600 aa).

The 183-residue stretch at 4-186 (SKIRNFSIIA…AIVEKIPSPS (183 aa)) folds into the tr-type G domain. GTP is bound by residues 16–21 (DHGKST) and 133–136 (NKID).

Belongs to the TRAFAC class translation factor GTPase superfamily. Classic translation factor GTPase family. LepA subfamily.

It localises to the cell membrane. It carries out the reaction GTP + H2O = GDP + phosphate + H(+). Functionally, required for accurate and efficient protein synthesis under certain stress conditions. May act as a fidelity factor of the translation reaction, by catalyzing a one-codon backward translocation of tRNAs on improperly translocated ribosomes. Back-translocation proceeds from a post-translocation (POST) complex to a pre-translocation (PRE) complex, thus giving elongation factor G a second chance to translocate the tRNAs correctly. Binds to ribosomes in a GTP-dependent manner. In Mycoplasma mycoides subsp. mycoides SC (strain CCUG 32753 / NCTC 10114 / PG1), this protein is Elongation factor 4.